The following is a 295-amino-acid chain: Trehalose/maltose transport system permease protein MalF (295 aa).

7 consecutive transmembrane segments (helical) span residues 16 to 36 (LGYL…ILPV), 79 to 99 (VSFS…FALI), 112 to 132 (AIVL…WELM), 146 to 166 (ILGV…FAIV), 210 to 230 (ITLP…TIDA), 236 to 256 (IIYV…SLLA), and 267 to 287 (IGSA…IVYL). Residues 75–286 (TFVTVSFSFV…VLVLSFTIVY (212 aa)) form the ABC transmembrane type-1 domain.

Belongs to the binding-protein-dependent transport system permease family. The complex is composed of two ATP-binding proteins (MalK), two transmembrane proteins (MalG and MalF) and a solute-binding protein (MalE).

It is found in the cell membrane. Part of the ABC transporter complex MalEFGK involved in trehalose/maltose import. Responsible for the translocation of the substrate across the membrane. The sequence is that of Trehalose/maltose transport system permease protein MalF (malF) from Thermococcus litoralis (strain ATCC 51850 / DSM 5473 / JCM 8560 / NS-C).